The primary structure comprises 306 residues: uncharacterized protein (306 aa).

It to M.jannaschii MJ0658.

This is an uncharacterized protein from Methanothermobacter thermautotrophicus (strain ATCC 29096 / DSM 1053 / JCM 10044 / NBRC 100330 / Delta H) (Methanobacterium thermoautotrophicum).